A 198-amino-acid polypeptide reads, in one-letter code: DnaJ homolog subfamily C member 12 (198 aa).

M1 is subject to N-acetylmethionine. Residues 14 to 79 (DYYTLLGCDE…ASRARYDHWR (66 aa)) form the J domain. Residues 112-167 (MLEESDQTPTDKIENEEQDEQKEIKKEEFGSTTEKMEQKESKSVEKSFSPQNPDSP) are disordered. Basic and acidic residues predominate over residues 120-156 (PTDKIENEEQDEQKEIKKEEFGSTTEKMEQKESKSVE). S160, S166, and S182 each carry phosphoserine.

As to quaternary structure, interacts with HSPA8. Interacts with TPH1. Interacts with TPH2.

It is found in the cytoplasm. Functionally, probable co-chaperone that participates in the proper folding of biopterin-dependent aromatic amino acid hydroxylases, which include phenylalanine-4-hydroxylase (PAH), tyrosine 3-monooxygenase (TH) and peripheral and neuronal tryptophan hydroxylases (TPH1 and TPH2). In Bos taurus (Bovine), this protein is DnaJ homolog subfamily C member 12 (DNAJC12).